Here is a 524-residue protein sequence, read N- to C-terminus: Alkaline phosphatase, tissue-nonspecific isozyme (524 aa).

Positions 1–17 (MISPFLVLAIGTCLTNS) are cleaved as a signal peptide. Asp-60 is a Mg(2+) binding site. The Zn(2+) site is built by Asp-60 and Ser-110. Ser-110 serves as the catalytic Phosphoserine intermediate. Ser-110 is subject to Phosphoserine. Residues Cys-139 and Cys-201 are joined by a disulfide bond. N-linked (GlcNAc...) asparagine glycosylation is present at Asn-140. Residue Thr-173 participates in Mg(2+) binding. Asn-230 carries an N-linked (GlcNAc...) asparagine glycan. Glu-235 is a Ca(2+) binding site. The N-linked (GlcNAc...) asparagine glycan is linked to Asn-271. 2 residues coordinate Ca(2+): Phe-290 and Glu-291. The N-linked (GlcNAc...) asparagine glycan is linked to Asn-302. Ca(2+) is bound at residue Asp-306. Residue Glu-332 coordinates Mg(2+). Zn(2+)-binding residues include Asp-337, His-341, Asp-378, and His-379. The N-linked (GlcNAc...) asparagine glycan is linked to Asn-430. His-454 lines the Zn(2+) pocket. Cysteines 489 and 497 form a disulfide. Ser-499 carries GPI-anchor amidated serine lipidation. Positions 500–524 (ASSAGGPSPGPLFLLLALPSLGILF) are cleaved as a propeptide — removed in mature form.

Belongs to the alkaline phosphatase family. In terms of assembly, homodimer. Mg(2+) serves as cofactor. Requires Zn(2+) as cofactor. The cofactor is Ca(2+). Post-translationally, N-glycosylated.

It localises to the cell membrane. Its subcellular location is the extracellular vesicle membrane. The protein localises to the mitochondrion membrane. The protein resides in the mitochondrion intermembrane space. It carries out the reaction a phosphate monoester + H2O = an alcohol + phosphate. It catalyses the reaction diphosphate + H2O = 2 phosphate + H(+). The enzyme catalyses pyridoxal 5'-phosphate + H2O = pyridoxal + phosphate. The catalysed reaction is phosphoethanolamine + H2O = ethanolamine + phosphate. It carries out the reaction N-phosphocreatine + H2O = creatine + phosphate. It catalyses the reaction ATP + H2O = ADP + phosphate + H(+). The enzyme catalyses ADP + H2O = AMP + phosphate + H(+). The catalysed reaction is AMP + H2O = adenosine + phosphate. With respect to regulation, phosphatase activity is specifically inhibited by 5-((5-chloro-2-methoxyphenyl)sulfonamido)nicotinamide (SBI-425). Functionally, alkaline phosphatase that metabolizes various phosphate compounds and plays a key role in skeletal mineralization and adaptive thermogenesis. Has broad substrate specificity and can hydrolyze a considerable variety of compounds: however, only a few substrates, such as diphosphate (inorganic pyrophosphate; PPi), pyridoxal 5'-phosphate (PLP) and N-phosphocreatine are natural substrates. Plays an essential role in skeletal and dental mineralization via its ability to hydrolyze extracellular diphosphate, a potent mineralization inhibitor, to phosphate: it thereby promotes hydroxyapatite crystal formation and increases inorganic phosphate concentration. Acts in a non-redundant manner with PHOSPHO1 in skeletal mineralization: while PHOSPHO1 mediates the initiation of hydroxyapatite crystallization in the matrix vesicles (MVs), ALPL/TNAP catalyzes the spread of hydroxyapatite crystallization in the extracellular matrix. Also promotes dephosphorylation of osteopontin (SSP1), an inhibitor of hydroxyapatite crystallization in its phosphorylated state; it is however unclear whether ALPL/TNAP mediates SSP1 dephosphorylation via a direct or indirect manner. Catalyzes dephosphorylation of PLP to pyridoxal (PL), the transportable form of vitamin B6, in order to provide a sufficient amount of PLP in the brain, an essential cofactor for enzymes catalyzing the synthesis of diverse neurotransmitters. Additionally, also able to mediate ATP degradation in a stepwise manner to adenosine, thereby regulating the availability of ligands for purinergic receptors. Also capable of dephosphorylating microbial products, such as lipopolysaccharides (LPS) as well as other phosphorylated small-molecules, such as poly-inosine:cytosine (poly I:C). Acts as a key regulator of adaptive thermogenesis as part of the futile creatine cycle: localizes to the mitochondria of thermogenic fat cells and acts by mediating hydrolysis of N-phosphocreatine to initiate a futile cycle of creatine dephosphorylation and phosphorylation. During the futile creatine cycle, creatine and N-phosphocreatine are in a futile cycle, which dissipates the high energy charge of N-phosphocreatine as heat without performing any mechanical or chemical work. This chain is Alkaline phosphatase, tissue-nonspecific isozyme (ALPL), found in Felis catus (Cat).